Reading from the N-terminus, the 592-residue chain is Alpha-1,3-galactosidase B (592 aa).

The N-terminal stretch at 1 to 14 is a signal peptide; sequence MKLLSVLSLSLVLS. C15 is lipidated: N-palmitoyl cysteine. C15 carries S-diacylglycerol cysteine lipidation. PbH1 repeat units lie at residues 429-451, 452-474, and 485-538; these read TPEV…LFST, PRKT…LLCG, and CRHV…VIED.

The protein belongs to the glycosyl hydrolase 110 family. B subfamily.

It localises to the cell membrane. The enzyme catalyses Hydrolysis of terminal, non-reducing branched (1-&gt;3)-alpha-D-galactosidic residues, producing free D-galactose.. It carries out the reaction Hydrolysis of terminal, non-reducing linear (1-&gt;3)-alpha-D-galactosidic residues, producing free D-galactose.. The catalysed reaction is Hydrolysis of terminal, non-reducing alpha-D-galactose residues in alpha-D-galactosides, including galactose oligosaccharides, galactomannans and galactolipids.. Its function is as follows. Alpha-galactosidase. Removes both branched alpha-1,3-linked galactose residues of blood group B antigens and linear alpha-1,3-linked galactose structures. This Phocaeicola vulgatus (strain ATCC 8482 / DSM 1447 / JCM 5826 / CCUG 4940 / NBRC 14291 / NCTC 11154) (Bacteroides vulgatus) protein is Alpha-1,3-galactosidase B (glaB1).